The sequence spans 404 residues: RNA exonuclease 3 (404 aa).

The region spanning 243–389 (VLSLDCEMAF…QDAIATMDVV (147 aa)) is the Exonuclease domain.

It belongs to the REXO1/REXO3 family.

Its subcellular location is the cytoplasm. It localises to the nucleus. In terms of biological role, 3' to 5' exoribonuclease required for proper 3' end maturation of MRP RNA and of the U5L snRNA. This is RNA exonuclease 3 (REX3) from Saccharomyces cerevisiae (strain ATCC 204508 / S288c) (Baker's yeast).